We begin with the raw amino-acid sequence, 251 residues long: Flap endonuclease Xni (251 aa).

A Mg(2+)-binding site is contributed by Asp104. Residues 160–250 (VLPRQLPDYW…SGNLQQLRLK (91 aa)) enclose the 5'-3' exonuclease domain. The K(+) site is built by Leu171, Ala172, Pro180, Val182, and Val185. The segment at 184–189 (GVGAKT) is interaction with DNA.

The protein belongs to the Xni family. The cofactor is Mg(2+). It depends on K(+) as a cofactor.

Its function is as follows. Has flap endonuclease activity. During DNA replication, flap endonucleases cleave the 5'-overhanging flap structure that is generated by displacement synthesis when DNA polymerase encounters the 5'-end of a downstream Okazaki fragment. This chain is Flap endonuclease Xni, found in Yersinia pseudotuberculosis serotype I (strain IP32953).